Here is a 214-residue protein sequence, read N- to C-terminus: ATP phosphoribosyltransferase (214 aa).

It belongs to the ATP phosphoribosyltransferase family. Short subfamily. In terms of assembly, heteromultimer composed of HisG and HisZ subunits.

Its subcellular location is the cytoplasm. It catalyses the reaction 1-(5-phospho-beta-D-ribosyl)-ATP + diphosphate = 5-phospho-alpha-D-ribose 1-diphosphate + ATP. It functions in the pathway amino-acid biosynthesis; L-histidine biosynthesis; L-histidine from 5-phospho-alpha-D-ribose 1-diphosphate: step 1/9. In terms of biological role, catalyzes the condensation of ATP and 5-phosphoribose 1-diphosphate to form N'-(5'-phosphoribosyl)-ATP (PR-ATP). Has a crucial role in the pathway because the rate of histidine biosynthesis seems to be controlled primarily by regulation of HisG enzymatic activity. The protein is ATP phosphoribosyltransferase of Ruminiclostridium cellulolyticum (strain ATCC 35319 / DSM 5812 / JCM 6584 / H10) (Clostridium cellulolyticum).